Here is a 359-residue protein sequence, read N- to C-terminus: 3-dehydroquinate synthase (359 aa).

Residues 70 to 75, 105 to 109, 129 to 130, K142, K151, and 169 to 172 contribute to the NAD(+) site; these read DGEQYK, GVIGD, TT, and FYKT. Positions 184, 247, and 264 each coordinate Zn(2+).

It belongs to the sugar phosphate cyclases superfamily. Dehydroquinate synthase family. Co(2+) serves as cofactor. Requires Zn(2+) as cofactor. It depends on NAD(+) as a cofactor.

Its subcellular location is the cytoplasm. It carries out the reaction 7-phospho-2-dehydro-3-deoxy-D-arabino-heptonate = 3-dehydroquinate + phosphate. It functions in the pathway metabolic intermediate biosynthesis; chorismate biosynthesis; chorismate from D-erythrose 4-phosphate and phosphoenolpyruvate: step 2/7. In terms of biological role, catalyzes the conversion of 3-deoxy-D-arabino-heptulosonate 7-phosphate (DAHP) to dehydroquinate (DHQ). This chain is 3-dehydroquinate synthase, found in Francisella tularensis subsp. holarctica (strain OSU18).